The following is a 177-amino-acid chain: UPF0102 protein BPP4042 (177 aa).

Residues 13 to 43 (AAQAQRRLHRRPPASPRASPGARDGGSPTQR) form a disordered region.

The protein belongs to the UPF0102 family.

This Bordetella parapertussis (strain 12822 / ATCC BAA-587 / NCTC 13253) protein is UPF0102 protein BPP4042.